A 414-amino-acid polypeptide reads, in one-letter code: Protein PBN1 (414 aa).

The Lumenal portion of the chain corresponds to 1 to 390 (MSVQTIQSES…INLPKLDSSD (390 aa)). 4 N-linked (GlcNAc...) asparagine glycosylation sites follow: Asn-44, Asn-95, Asn-169, and Asn-375. A helical transmembrane segment spans residues 391–410 (NLCIQLFTLGLVLFSVLYLI). Residues 411–414 (RKLF) are Cytoplasmic-facing.

This sequence belongs to the PIGX family.

The protein localises to the endoplasmic reticulum membrane. Its pathway is glycolipid biosynthesis; glycosylphosphatidylinositol-anchor biosynthesis. Functionally, required for proper folding and/or the stability of a subset of proteins in the endoplasmic reticulum. Component of glycosylphosphatidylinositol-mannosyltransferase 1 which transfers the first of the 4 mannoses in the GPI-anchor precursors during GPI-anchor biosynthesis. Probably acts by stabilizing the mannosyltransferase GPI14. The sequence is that of Protein PBN1 (PBN1) from Kluyveromyces lactis (strain ATCC 8585 / CBS 2359 / DSM 70799 / NBRC 1267 / NRRL Y-1140 / WM37) (Yeast).